A 328-amino-acid chain; its full sequence is MISLREFIFSNNVNKYISKEDLYSLFIIIELTSKIIHNYIILNNITRIKQEKIKKNIHGEHQTKLDLLSNKKFIDMIKTHYNIAGIASEEEAKFISFKQEKYGKYIFLIDPLDGSLSADCNTPVGTIFSLYCRVTPIGVEISEKDFLQPGNKQILSGYILYGSSTILVFTVKSGVHIFTYHPFFSTFFLSKKNFNYPKKNNIYSINEANYNNFSLGIKKYIMSCKSNNNISSRYTGSLVADFHRNLIKGGIYLYPNTKIYKHGKLRLMYECNPIALISSQANGSSSDGNINILDINPKILHQCSPFFVGTKSMVKLVNKFILGYYNHN.

Positions 89, 110, 112, and 113 each coordinate Mg(2+). Residues N206, Y234, 252–254 (YLY), and K264 contribute to the substrate site. E270 is a binding site for Mg(2+).

This sequence belongs to the FBPase class 1 family. In terms of assembly, homotetramer. The cofactor is Mg(2+).

It localises to the cytoplasm. The enzyme catalyses beta-D-fructose 1,6-bisphosphate + H2O = beta-D-fructose 6-phosphate + phosphate. Its pathway is carbohydrate biosynthesis; gluconeogenesis. The protein is Fructose-1,6-bisphosphatase class 1 of Wigglesworthia glossinidia brevipalpis.